Here is a 121-residue protein sequence, read N- to C-terminus: Putative ferredoxin (121 aa).

It to E.coli YkgJ.

In Acinetobacter calcoaceticus, this protein is Putative ferredoxin.